Here is a 175-residue protein sequence, read N- to C-terminus: Gamma-crystallin B (175 aa).

2 Beta/gamma crystallin 'Greek key' domains span residues 2–40 and 41–83; these read GKIT…RVDS and GCWM…CLIP. The tract at residues 84–88 is connecting peptide; that stretch reads QHSGT. Beta/gamma crystallin 'Greek key' domains are found at residues 89–129 and 130–172; these read YRMR…NVME and GCWV…RRVM.

Belongs to the beta/gamma-crystallin family.

Crystallins are the dominant structural components of the vertebrate eye lens. The chain is Gamma-crystallin B (Crygb) from Mus musculus (Mouse).